Here is a 114-residue protein sequence, read N- to C-terminus: Iron-sulfur cluster insertion protein ErpA (114 aa).

Residues Cys-42, Cys-106, and Cys-108 each contribute to the iron-sulfur cluster site.

The protein belongs to the HesB/IscA family. As to quaternary structure, homodimer. It depends on iron-sulfur cluster as a cofactor.

In terms of biological role, required for insertion of 4Fe-4S clusters for at least IspG. The protein is Iron-sulfur cluster insertion protein ErpA of Cronobacter sakazakii (strain ATCC BAA-894) (Enterobacter sakazakii).